We begin with the raw amino-acid sequence, 318 residues long: MTSKLEQLRAMTTVVADTGDIEAVTRLKPVDCTTNPTIVLKALGTDMFADAFEEAIKWGKAKGGASDAVTEAIADRLAISVGAALAKIVPGRVSTEVDADLSFDTQASLNKARAIIAQYKERGIEKDRILIKLASTWEGIRAAEVLQKEGIDCNLTLLFSKAQAIACAEAKVFLISPFVGRILDWYKKSTGENYTSETDPGVVSVRQIYNFYKVNGIETIVMGASFRNAGEIEALAGCDRLTISPALLDELDAATGDLPRVLSPEKTTPDPLVSLDEKAFRWALNEDAMATEKLSEGIRAFAKDLGTLRGMVAKKLAA.

Lys132 (schiff-base intermediate with substrate) is an active-site residue.

The protein belongs to the transaldolase family. Type 1 subfamily. As to quaternary structure, homodimer.

The protein localises to the cytoplasm. The catalysed reaction is D-sedoheptulose 7-phosphate + D-glyceraldehyde 3-phosphate = D-erythrose 4-phosphate + beta-D-fructose 6-phosphate. The protein operates within carbohydrate degradation; pentose phosphate pathway; D-glyceraldehyde 3-phosphate and beta-D-fructose 6-phosphate from D-ribose 5-phosphate and D-xylulose 5-phosphate (non-oxidative stage): step 2/3. Functionally, transaldolase is important for the balance of metabolites in the pentose-phosphate pathway. This is Transaldolase from Allorhizobium ampelinum (strain ATCC BAA-846 / DSM 112012 / S4) (Agrobacterium vitis (strain S4)).